The following is a 509-amino-acid chain: Cardiolipin synthase 1 (509 aa).

3 helical membrane-spanning segments follow: residues 4 to 24 (PIIQLLLIFTIVSIVPFLLNT), 30 to 50 (YTFVGVLWSITIVGISFVIFI), and 59 to 79 (LAWFLVLALLPVVGVLLYSIF). 2 consecutive PLD phosphodiesterase domains span residues 238–265 (VNYRNHRKIVIVDGEIGFTGGLNVGDEY) and 422–449 (KDGFMHAKILLVDDKIATIGTANMDVRS). Residues His-243, Lys-245, Asp-250, His-427, Lys-429, and Asp-434 contribute to the active site.

The protein belongs to the phospholipase D family. Cardiolipin synthase subfamily.

Its subcellular location is the cell membrane. It catalyses the reaction 2 a 1,2-diacyl-sn-glycero-3-phospho-(1'-sn-glycerol) = a cardiolipin + glycerol. Functionally, catalyzes the reversible phosphatidyl group transfer from one phosphatidylglycerol molecule to another to form cardiolipin (CL) (diphosphatidylglycerol) and glycerol. This is Cardiolipin synthase 1 (cls1) from Bacillus anthracis.